Here is a 156-residue protein sequence, read N- to C-terminus: Small ribosomal subunit protein uS7 (156 aa).

The protein belongs to the universal ribosomal protein uS7 family. As to quaternary structure, part of the 30S ribosomal subunit. Contacts proteins S9 and S11.

Functionally, one of the primary rRNA binding proteins, it binds directly to 16S rRNA where it nucleates assembly of the head domain of the 30S subunit. Is located at the subunit interface close to the decoding center, probably blocks exit of the E-site tRNA. The sequence is that of Small ribosomal subunit protein uS7 from Syntrophus aciditrophicus (strain SB).